The chain runs to 157 residues: 6,7-dimethyl-8-ribityllumazine synthase (157 aa).

5-amino-6-(D-ribitylamino)uracil is bound by residues F22, 56–58 (AFE), and 81–83 (VLI). 86-87 (ET) provides a ligand contact to (2S)-2-hydroxy-3-oxobutyl phosphate. The active-site Proton donor is H89. F114 lines the 5-amino-6-(D-ribitylamino)uracil pocket. A (2S)-2-hydroxy-3-oxobutyl phosphate-binding site is contributed by R128.

Belongs to the DMRL synthase family.

It catalyses the reaction (2S)-2-hydroxy-3-oxobutyl phosphate + 5-amino-6-(D-ribitylamino)uracil = 6,7-dimethyl-8-(1-D-ribityl)lumazine + phosphate + 2 H2O + H(+). It participates in cofactor biosynthesis; riboflavin biosynthesis; riboflavin from 2-hydroxy-3-oxobutyl phosphate and 5-amino-6-(D-ribitylamino)uracil: step 1/2. Functionally, catalyzes the formation of 6,7-dimethyl-8-ribityllumazine by condensation of 5-amino-6-(D-ribitylamino)uracil with 3,4-dihydroxy-2-butanone 4-phosphate. This is the penultimate step in the biosynthesis of riboflavin. The chain is 6,7-dimethyl-8-ribityllumazine synthase from Chlamydia trachomatis serovar L2 (strain ATCC VR-902B / DSM 19102 / 434/Bu).